Reading from the N-terminus, the 896-residue chain is DNA mismatch repair protein MutS (896 aa).

599–606 (GPNMAGKS) is a binding site for ATP.

This sequence belongs to the DNA mismatch repair MutS family.

In terms of biological role, this protein is involved in the repair of mismatches in DNA. It is possible that it carries out the mismatch recognition step. This protein has a weak ATPase activity. In Geobacillus kaustophilus (strain HTA426), this protein is DNA mismatch repair protein MutS.